A 36-amino-acid polypeptide reads, in one-letter code: Conotoxin Cal6.1h (36 aa).

Residues 1–7 (GLGRPSR) constitute a propeptide that is removed on maturation. 3 disulfide bridges follow: Cys-9/Cys-25, Cys-16/Cys-29, and Cys-24/Cys-34.

This sequence belongs to the conotoxin O1 superfamily. In terms of tissue distribution, expressed by the venom duct.

The protein localises to the secreted. Its function is as follows. Probable neurotoxin with unknown target. Possibly targets ion channels. The chain is Conotoxin Cal6.1h from Californiconus californicus (California cone).